Reading from the N-terminus, the 33-residue chain is Mu-theraphotoxin-Osp1b (33 aa).

Cystine bridges form between Cys2–Cys17, Cys9–Cys22, and Cys16–Cys29.

The protein belongs to the neurotoxin 10 (Hwtx-1) family. 22 (Htx-4) subfamily. As to expression, expressed by the venom gland.

It is found in the secreted. Functionally, voltage-gated sodium channel Nav1.7/SCN9A inhibitor. This chain is Mu-theraphotoxin-Osp1b, found in Orphnaecus sp. (strain Maanghit-Cave/Philippines) (Tarantula spider).